A 127-amino-acid chain; its full sequence is Large ribosomal subunit protein bL12 (127 aa).

It belongs to the bacterial ribosomal protein bL12 family. Homodimer. Part of the ribosomal stalk of the 50S ribosomal subunit. Forms a multimeric L10(L12)X complex, where L10 forms an elongated spine to which 2 to 4 L12 dimers bind in a sequential fashion. Binds GTP-bound translation factors.

Functionally, forms part of the ribosomal stalk which helps the ribosome interact with GTP-bound translation factors. Is thus essential for accurate translation. This chain is Large ribosomal subunit protein bL12, found in Nitratiruptor sp. (strain SB155-2).